A 125-amino-acid polypeptide reads, in one-letter code: Small ribosomal subunit protein uS13 (125 aa).

Positions 92–125 (RRHLPVHGQRTKTNARTRKGPKKTVAGKKKAGKK) are disordered.

Belongs to the universal ribosomal protein uS13 family. Part of the 30S ribosomal subunit. Forms a loose heterodimer with protein S19. Forms two bridges to the 50S subunit in the 70S ribosome.

Functionally, located at the top of the head of the 30S subunit, it contacts several helices of the 16S rRNA. In the 70S ribosome it contacts the 23S rRNA (bridge B1a) and protein L5 of the 50S subunit (bridge B1b), connecting the 2 subunits; these bridges are implicated in subunit movement. Contacts the tRNAs in the A and P-sites. The protein is Small ribosomal subunit protein uS13 of Saccharopolyspora erythraea (strain ATCC 11635 / DSM 40517 / JCM 4748 / NBRC 13426 / NCIMB 8594 / NRRL 2338).